Reading from the N-terminus, the 142-residue chain is DNA-directed RNA polymerase subunit omega (142 aa).

Residues 93 to 142 (AWSVPEAGGDEGGDASELLDDEGEGAAAGAEPDFSEMDVPLADLADEDKI) form a disordered region. The segment covering 100-116 (GGDEGGDASELLDDEGE) has biased composition (acidic residues).

Belongs to the RNA polymerase subunit omega family. As to quaternary structure, the RNAP catalytic core consists of 2 alpha, 1 beta, 1 beta' and 1 omega subunit. When a sigma factor is associated with the core the holoenzyme is formed, which can initiate transcription.

It carries out the reaction RNA(n) + a ribonucleoside 5'-triphosphate = RNA(n+1) + diphosphate. In terms of biological role, promotes RNA polymerase assembly. Latches the N- and C-terminal regions of the beta' subunit thereby facilitating its interaction with the beta and alpha subunits. This Rhodospirillum centenum (strain ATCC 51521 / SW) protein is DNA-directed RNA polymerase subunit omega.